Reading from the N-terminus, the 404-residue chain is Tryptophan synthase beta chain (404 aa).

K95 carries the post-translational modification N6-(pyridoxal phosphate)lysine.

The protein belongs to the TrpB family. Tetramer of two alpha and two beta chains. Pyridoxal 5'-phosphate serves as cofactor.

It catalyses the reaction (1S,2R)-1-C-(indol-3-yl)glycerol 3-phosphate + L-serine = D-glyceraldehyde 3-phosphate + L-tryptophan + H2O. Its pathway is amino-acid biosynthesis; L-tryptophan biosynthesis; L-tryptophan from chorismate: step 5/5. In terms of biological role, the beta subunit is responsible for the synthesis of L-tryptophan from indole and L-serine. In Thermus thermophilus (strain ATCC BAA-163 / DSM 7039 / HB27), this protein is Tryptophan synthase beta chain (trpB).